The primary structure comprises 424 residues: Gamma-glutamyl phosphate reductase (424 aa).

Residues 1 to 27 (MSVEAQSRSGAVDTQEPADLREQVHSA) form a disordered region.

It belongs to the gamma-glutamyl phosphate reductase family.

Its subcellular location is the cytoplasm. The catalysed reaction is L-glutamate 5-semialdehyde + phosphate + NADP(+) = L-glutamyl 5-phosphate + NADPH + H(+). It functions in the pathway amino-acid biosynthesis; L-proline biosynthesis; L-glutamate 5-semialdehyde from L-glutamate: step 2/2. Catalyzes the NADPH-dependent reduction of L-glutamate 5-phosphate into L-glutamate 5-semialdehyde and phosphate. The product spontaneously undergoes cyclization to form 1-pyrroline-5-carboxylate. In Mycolicibacterium smegmatis (strain ATCC 700084 / mc(2)155) (Mycobacterium smegmatis), this protein is Gamma-glutamyl phosphate reductase.